A 326-amino-acid chain; its full sequence is MAEVEKVREKEVEKEVERKEIEREEDVEVCPECGSPRLIRDYRRGEFICQDCGLVIEDTYIDAGPEWRAFDSEQRDKRSRVGAPVTYTIHDKGLSTIIDWSNKDYYGKAISVRNRAQLFRLRKWQRRIRISNATERNLAFALSELDRMASALGLPKSVRETAAVIYRKAVEKNLIRGRSIEGVVAAALYAACRQAGVPRTLDEIATYSRVDRKEIGRTYRFITRELGLKLMPTSPADYIPRFCAALGLSGEVQKKAIEIIKKAEERELTSGRGPTGVAAAALYVASILLGERRTQREVAEVAGVTEVTIRNRYKELAEKLGIEIIL.

The segment at 26 to 57 (DVEVCPECGSPRLIRDYRRGEFICQDCGLVIE) adopts a TFIIB-type zinc-finger fold. Zn(2+) contacts are provided by Cys30, Cys33, Cys49, and Cys52. Repeat copies occupy residues 143-226 (SELD…TREL) and 237-318 (DYIP…ELAE).

Belongs to the TFIIB family.

In terms of biological role, stabilizes TBP binding to an archaeal box-A promoter. Also responsible for recruiting RNA polymerase II to the pre-initiation complex (DNA-TBP-TFIIB). This Archaeoglobus fulgidus (strain ATCC 49558 / DSM 4304 / JCM 9628 / NBRC 100126 / VC-16) protein is Transcription initiation factor IIB.